Reading from the N-terminus, the 524-residue chain is Nif-specific regulatory protein (524 aa).

Residues 1–182 (MIHKSDSDTT…AQTIRLMILP (182 aa)) form an a domain region. The GAF domain maps to 35–176 (EASKTLQEVL…TVANLIAQTI (142 aa)). A Sigma-54 factor interaction domain is found at 212–481 (MVGKSPAMRQ…DGWLDNSLDE (270 aa)). Residues 240–247 (GESGTGKE) and 303–312 (ADGGTLFLDE) each bind ATP. The interval 482-524 (RQRLIAALEKAGWVQAKAARLLGMTPRQVAYRIQIMDITMPRL) is C-terminal DNA-binding domain. A DNA-binding region (H-T-H motif) is located at residues 496–515 (QAKAARLLGMTPRQVAYRIQ).

In terms of assembly, interacts with sigma-54.

Its function is as follows. Required for activation of most nif operons, which are directly involved in nitrogen fixation. This is Nif-specific regulatory protein (nifA) from Klebsiella pneumoniae.